The primary structure comprises 326 residues: Apoptosis facilitator Bcl-2-like protein 14 (326 aa).

Ser44 bears the Phosphoserine mark. The segment at 100–147 is disordered; that stretch reads AEKEEDSQSSPPEICAQAQRSGVPQARPRSPKWPRSRSSMDQRLEHKA. The span at 137 to 147 shows a compositional bias: basic and acidic residues; that stretch reads SSMDQRLEHKA. Residues 211-225 carry the BH3 motif; that stretch reads IVELLKYSGEQLERE. A BH2 motif is present at residues 307–314; the sequence is WIQQHGGW.

The protein belongs to the Bcl-2 family. Phosphorylated by MELK, leading to inhibit its pro-apoptotic function.

The protein localises to the cytoplasm. Plays a role in apoptosis. The protein is Apoptosis facilitator Bcl-2-like protein 14 (BCL2L14) of Bos taurus (Bovine).